A 162-amino-acid polypeptide reads, in one-letter code: MAETNRAVIKLREKFSASVLDVKEFRGEVTVTVKREDIVEICNFLKSSLAYNLCTDVTAVDYLGKQEPRFMVVYNLYSIPNKDRLRVKAGVPEAGCSIDTVSCVWSAANWLEREVYDLMGVVFNNHPDLRRILMTDDWVGHPLRKDYPLQGPGREPYKGRLS.

The protein belongs to the complex I 30 kDa subunit family. In terms of assembly, NDH-1 is composed of 14 different subunits. Subunits NuoB, C, D, E, F, and G constitute the peripheral sector of the complex.

The protein localises to the cell inner membrane. It catalyses the reaction a quinone + NADH + 5 H(+)(in) = a quinol + NAD(+) + 4 H(+)(out). In terms of biological role, NDH-1 shuttles electrons from NADH, via FMN and iron-sulfur (Fe-S) centers, to quinones in the respiratory chain. The immediate electron acceptor for the enzyme in this species is believed to be ubiquinone. Couples the redox reaction to proton translocation (for every two electrons transferred, four hydrogen ions are translocated across the cytoplasmic membrane), and thus conserves the redox energy in a proton gradient. The polypeptide is NADH-quinone oxidoreductase subunit C (Geobacter metallireducens (strain ATCC 53774 / DSM 7210 / GS-15)).